Here is a 914-residue protein sequence, read N- to C-terminus: UPF0182 protein PTH_1387 (914 aa).

7 helical membrane-spanning segments follow: residues 7-27 (FAAYVLAGFGLIFLALTIAGA), 48-68 (IIISDLGLRLAVGLTFFVLLF), 109-129 (LLLLAFIALSALMAFLFNFTV), 173-193 (INWVILVSAFWVLAAYFVVYF), 209-229 (YHFSFLAAIFFGLKAAGYQLE), 252-272 (TLLAYKVLTYIALLCALAILI), and 281-301 (LVIYSIGVLLIASVLLGGIYP).

This sequence belongs to the UPF0182 family.

It localises to the cell membrane. This chain is UPF0182 protein PTH_1387, found in Pelotomaculum thermopropionicum (strain DSM 13744 / JCM 10971 / SI).